We begin with the raw amino-acid sequence, 241 residues long: Phosducin-like protein 2 (241 aa).

The Phosducin domain maps to 34 to 202 (VLRLQKEAMV…EWKLAEVGAI (169 aa)). The tract at residues 89-241 (FGELREISGN…DSSNSDNDTK (153 aa)) is thioredoxin fold.

It belongs to the phosducin family. In terms of assembly, interacts with the CCT chaperonin complex and actin. In terms of tissue distribution, testis-specific.

The protein localises to the endoplasmic reticulum. Functionally, essential for male fertility, spermiogenesis and acrosome formation. This Homo sapiens (Human) protein is Phosducin-like protein 2 (PDCL2).